The sequence spans 219 residues: Small ribosomal subunit protein uS3c (219 aa).

The KH type-2 domain occupies 39-118; that stretch reads IRSFIRKYIQ…RLNIVITKVE (80 aa).

Belongs to the universal ribosomal protein uS3 family. As to quaternary structure, part of the 30S ribosomal subunit.

The protein resides in the plastid. This Cuscuta obtusiflora (Peruvian dodder) protein is Small ribosomal subunit protein uS3c (rps3).